An 821-amino-acid polypeptide reads, in one-letter code: Serine/threonine-protein kinase CTR1 (821 aa).

Disordered regions lie at residues 1–76 (MEMP…LNNQ) and 481–502 (NPGG…PSAN). Residues 14–25 (SQFSDDQVSVSV) are compositionally biased toward low complexity. Residues 35–49 (SLSSENRSNHNSGNT) are compositionally biased toward polar residues. The Protein kinase domain occupies 551–809 (LNIKEKIGAG…TIMDLLRPLI (259 aa)). ATP is bound by residues 557–565 (IGAGSFGTV) and K578. D676 (proton acceptor) is an active-site residue.

Belongs to the protein kinase superfamily. TKL Ser/Thr protein kinase family. RAF subfamily. In terms of assembly, interacts with EIN2 (via C-terminus). As to expression, expressed in both seedlings and adult plants.

It carries out the reaction L-seryl-[protein] + ATP = O-phospho-L-seryl-[protein] + ADP + H(+). The catalysed reaction is L-threonyl-[protein] + ATP = O-phospho-L-threonyl-[protein] + ADP + H(+). Kinase activity is inhibited by C24:1-ceramide during hypoxia (e.g. submergences). Functionally, acts as a negative regulator in the ethylene response pathway. Phosphorylates the cytosolic C-terminal domain of EIN2, preventing the signaling in the absence of ethylene. Interacts with C24:1-ceramide upon hypoxic conditions (e.g. submergences) to in turn regulate EIN2 endoplasmic reticulum (ER)-to-nucleus translocation and EIN3 stabilization. This is Serine/threonine-protein kinase CTR1 from Arabidopsis thaliana (Mouse-ear cress).